The following is a 366-amino-acid chain: Carbamoyl phosphate synthase small chain (366 aa).

The CPSase stretch occupies residues 1 to 171 (MLEKRYLVLE…KTPYVSTGSD (171 aa)). L-glutamine-binding residues include Ser47, Gly221, and Gly223. A Glutamine amidotransferase type-1 domain is found at 173–360 (SVVLLDFGKK…ITMMKDFKEK (188 aa)). Catalysis depends on Cys248, which acts as the Nucleophile. L-glutamine contacts are provided by Leu249, Gln252, Asn290, Gly292, and Tyr293. Residues His333 and Glu335 contribute to the active site.

This sequence belongs to the CarA family. In terms of assembly, composed of two chains; the small (or glutamine) chain promotes the hydrolysis of glutamine to ammonia, which is used by the large (or ammonia) chain to synthesize carbamoyl phosphate. Tetramer of heterodimers (alpha,beta)4.

It carries out the reaction hydrogencarbonate + L-glutamine + 2 ATP + H2O = carbamoyl phosphate + L-glutamate + 2 ADP + phosphate + 2 H(+). It catalyses the reaction L-glutamine + H2O = L-glutamate + NH4(+). It functions in the pathway amino-acid biosynthesis; L-arginine biosynthesis; carbamoyl phosphate from bicarbonate: step 1/1. The protein operates within pyrimidine metabolism; UMP biosynthesis via de novo pathway; (S)-dihydroorotate from bicarbonate: step 1/3. Its function is as follows. Small subunit of the glutamine-dependent carbamoyl phosphate synthetase (CPSase). CPSase catalyzes the formation of carbamoyl phosphate from the ammonia moiety of glutamine, carbonate, and phosphate donated by ATP, constituting the first step of 2 biosynthetic pathways, one leading to arginine and/or urea and the other to pyrimidine nucleotides. The small subunit (glutamine amidotransferase) binds and cleaves glutamine to supply the large subunit with the substrate ammonia. The sequence is that of Carbamoyl phosphate synthase small chain from Staphylococcus epidermidis (strain ATCC 35984 / DSM 28319 / BCRC 17069 / CCUG 31568 / BM 3577 / RP62A).